Here is a 599-residue protein sequence, read N- to C-terminus: Elongation factor 4 (599 aa).

One can recognise a tr-type G domain in the interval 5 to 187 (KNIRNFSIIA…QLVERIPAPE (183 aa)). GTP-binding positions include 17 to 22 (DHGKST) and 134 to 137 (NKID).

Belongs to the TRAFAC class translation factor GTPase superfamily. Classic translation factor GTPase family. LepA subfamily.

It localises to the cell inner membrane. It catalyses the reaction GTP + H2O = GDP + phosphate + H(+). Functionally, required for accurate and efficient protein synthesis under certain stress conditions. May act as a fidelity factor of the translation reaction, by catalyzing a one-codon backward translocation of tRNAs on improperly translocated ribosomes. Back-translocation proceeds from a post-translocation (POST) complex to a pre-translocation (PRE) complex, thus giving elongation factor G a second chance to translocate the tRNAs correctly. Binds to ribosomes in a GTP-dependent manner. In Alcanivorax borkumensis (strain ATCC 700651 / DSM 11573 / NCIMB 13689 / SK2), this protein is Elongation factor 4.